Here is a 314-residue protein sequence, read N- to C-terminus: Acetyl-coenzyme A carboxylase carboxyl transferase subunit beta (314 aa).

One can recognise a CoA carboxyltransferase N-terminal domain in the interval 24 to 293 (LWIKCPDTGQ…IDAAPEPSPA (270 aa)). Residues 283 to 314 (EIDAAPEPSPAAEEPAEPMPAPEAAAPSAPPA) form a disordered region. 2 stretches are compositionally biased toward low complexity: residues 284–295 (IDAAPEPSPAAE) and 304–314 (PEAAAPSAPPA).

It belongs to the AccD/PCCB family. As to quaternary structure, acetyl-CoA carboxylase is a heterohexamer composed of biotin carboxyl carrier protein (AccB), biotin carboxylase (AccC) and two subunits each of ACCase subunit alpha (AccA) and ACCase subunit beta (AccD).

It localises to the cytoplasm. It catalyses the reaction N(6)-carboxybiotinyl-L-lysyl-[protein] + acetyl-CoA = N(6)-biotinyl-L-lysyl-[protein] + malonyl-CoA. The protein operates within lipid metabolism; malonyl-CoA biosynthesis; malonyl-CoA from acetyl-CoA: step 1/1. In terms of biological role, component of the acetyl coenzyme A carboxylase (ACC) complex. Biotin carboxylase (BC) catalyzes the carboxylation of biotin on its carrier protein (BCCP) and then the CO(2) group is transferred by the transcarboxylase to acetyl-CoA to form malonyl-CoA. This chain is Acetyl-coenzyme A carboxylase carboxyl transferase subunit beta, found in Nitrobacter hamburgensis (strain DSM 10229 / NCIMB 13809 / X14).